The sequence spans 542 residues: Chaperonin GroEL 4 (542 aa).

ATP contacts are provided by residues 30–33 (TLGP), Lys51, 87–91 (DGTTT), Gly415, and Asp496.

The protein belongs to the chaperonin (HSP60) family. In terms of assembly, forms a cylinder of 14 subunits composed of two heptameric rings stacked back-to-back. Interacts with the co-chaperonin GroES.

The protein localises to the cytoplasm. The enzyme catalyses ATP + H2O + a folded polypeptide = ADP + phosphate + an unfolded polypeptide.. In terms of biological role, together with its co-chaperonin GroES, plays an essential role in assisting protein folding. The GroEL-GroES system forms a nano-cage that allows encapsulation of the non-native substrate proteins and provides a physical environment optimized to promote and accelerate protein folding. The protein is Chaperonin GroEL 4 of Rhizobium etli (strain ATCC 51251 / DSM 11541 / JCM 21823 / NBRC 15573 / CFN 42).